The chain runs to 75 residues: Kappa-scoloptoxin(03)-Ssm1e (75 aa).

An N-terminal signal peptide occupies residues 1–23 (MKSSMAILLVMALIIFTLDKNYS).

This sequence belongs to the scoloptoxin-03 family. In terms of processing, contains 3 disulfide bonds. Expressed by the venom gland.

It localises to the secreted. Its function is as follows. Inhibits voltage-gated potassium channels. This Scolopendra mutilans (Chinese red-headed centipede) protein is Kappa-scoloptoxin(03)-Ssm1e.